A 466-amino-acid chain; its full sequence is Acetyl-coenzyme A carboxylase carboxyl transferase subunit beta, chloroplastic (466 aa).

Residues 198 to 466 (LWIQCENCYE…FPLNQNSIGQ (269 aa)) enclose the CoA carboxyltransferase N-terminal domain. 4 residues coordinate Zn(2+): Cys-202, Cys-205, Cys-221, and Cys-224. The C4-type zinc finger occupies 202-224 (CENCYELNYKKLLKSKMRICDEC).

It belongs to the AccD/PCCB family. As to quaternary structure, acetyl-CoA carboxylase is a heterohexamer composed of biotin carboxyl carrier protein, biotin carboxylase and 2 subunits each of ACCase subunit alpha and ACCase plastid-coded subunit beta (accD). Requires Zn(2+) as cofactor.

The protein localises to the plastid. It localises to the chloroplast stroma. It catalyses the reaction N(6)-carboxybiotinyl-L-lysyl-[protein] + acetyl-CoA = N(6)-biotinyl-L-lysyl-[protein] + malonyl-CoA. It participates in lipid metabolism; malonyl-CoA biosynthesis; malonyl-CoA from acetyl-CoA: step 1/1. Component of the acetyl coenzyme A carboxylase (ACC) complex. Biotin carboxylase (BC) catalyzes the carboxylation of biotin on its carrier protein (BCCP) and then the CO(2) group is transferred by the transcarboxylase to acetyl-CoA to form malonyl-CoA. This chain is Acetyl-coenzyme A carboxylase carboxyl transferase subunit beta, chloroplastic, found in Fagopyrum esculentum subsp. ancestrale (Wild buckwheat).